A 153-amino-acid chain; its full sequence is Ribosome maturation factor RimP (153 aa).

The protein belongs to the RimP family.

The protein resides in the cytoplasm. Functionally, required for maturation of 30S ribosomal subunits. The sequence is that of Ribosome maturation factor RimP from Clostridium tetani (strain Massachusetts / E88).